A 101-amino-acid polypeptide reads, in one-letter code: Large ribosomal subunit protein uL23 (101 aa).

It belongs to the universal ribosomal protein uL23 family. In terms of assembly, part of the 50S ribosomal subunit. Contacts protein L29, and trigger factor when it is bound to the ribosome.

Functionally, one of the early assembly proteins it binds 23S rRNA. One of the proteins that surrounds the polypeptide exit tunnel on the outside of the ribosome. Forms the main docking site for trigger factor binding to the ribosome. The sequence is that of Large ribosomal subunit protein uL23 from Lactobacillus helveticus (strain DPC 4571).